Reading from the N-terminus, the 484-residue chain is MNILRRGRLGNSIKEDVAKYTTSLSFDKEIFEADILCDIAHVIMLYEQGIIKKEDAKKIIEGLKEIYKKGMENLNLDPSLDDIHMVIESELIKKLGEDVAGRMHTGRSRNDEVATDLRIALREKVLIIAKSLIKMLKDILELAEKHKETLIVGYTHLQHAQPVTFAHHLLSYVSAIERDILRLLDAYKRINISPLGCGAMATTGFKINRERTKELLGFDALIENSMDGVSARDFILETMADLAILGTNLSKICEELILFSTYEFGTIEIANEFCSTSSIMPQKKNPDVAEIARAKLSKLNGNLVTALTILKALPNTYNRDLQEISPHLWDSVYTTIDTIKMVHGMLKTIKINKERMEELAKANYSTATELADTLVRETGIPFRTAHGIVGEVVRRSIEEKKDMIEVIYEVLEKYNLKVDEEKIKKALDPYENVKMRDVIGGPAPEEVEKRIKVFRERLDRYEKEVDEKLQKINKVKEILLSYEI.

It belongs to the lyase 1 family. Argininosuccinate lyase subfamily.

It localises to the cytoplasm. It carries out the reaction 2-(N(omega)-L-arginino)succinate = fumarate + L-arginine. It participates in amino-acid biosynthesis; L-arginine biosynthesis; L-arginine from L-ornithine and carbamoyl phosphate: step 3/3. The chain is Argininosuccinate lyase from Methanocaldococcus jannaschii (strain ATCC 43067 / DSM 2661 / JAL-1 / JCM 10045 / NBRC 100440) (Methanococcus jannaschii).